Here is a 252-residue protein sequence, read N- to C-terminus: Adenosylcobinamide-GDP ribazoletransferase (252 aa).

The next 6 membrane-spanning stretches (helical) occupy residues Leu29–Val49, Gly50–Leu70, Val104–Val124, Phe129–Leu149, Phe166–Leu186, and Phe194–Val214.

The protein belongs to the CobS family. Requires Mg(2+) as cofactor.

It is found in the cell inner membrane. It catalyses the reaction alpha-ribazole + adenosylcob(III)inamide-GDP = adenosylcob(III)alamin + GMP + H(+). The catalysed reaction is alpha-ribazole 5'-phosphate + adenosylcob(III)inamide-GDP = adenosylcob(III)alamin 5'-phosphate + GMP + H(+). It participates in cofactor biosynthesis; adenosylcobalamin biosynthesis; adenosylcobalamin from cob(II)yrinate a,c-diamide: step 7/7. Joins adenosylcobinamide-GDP and alpha-ribazole to generate adenosylcobalamin (Ado-cobalamin). Also synthesizes adenosylcobalamin 5'-phosphate from adenosylcobinamide-GDP and alpha-ribazole 5'-phosphate. This Chlorobium chlorochromatii (strain CaD3) protein is Adenosylcobinamide-GDP ribazoletransferase.